Consider the following 856-residue polypeptide: Rab effector MyRIP (856 aa).

In terms of domain architecture, RabBD spans 4–124 (KLDLSGLTDD…TQSLEWFYNN (121 aa)). The segment at 63 to 105 (CCMRCCSPFTFLVNARRRCGECKFSVCKSCCSYQKHEKLWVCC) adopts an FYVE-type zinc-finger fold. Residues 143–560 (RKHRLESGAC…AQVSDNVSET (418 aa)) form a myosin-binding region. The segment at 193–209 (VALRVAEEAIEEAISKA) is PRKAR2A-binding. The interval 232 to 248 (LTEELAGTILQRIIRKQ) is negative regulation of PRKAR2A-binding. The tract at residues 252-294 (AELRAEEEEPEWPRSQSGSVKARGEGTTAPPGRHKARATFRRS) is disordered. Phosphoserine is present on residues serine 299 and serine 351. Disordered regions lie at residues 351–578 (SPDG…SVEE), 592–625 (SEKE…NNQG), 778–806 (RRDQ…PPVK), and 826–856 (LLQG…AVMY). Residues 395-405 (IGSDSEEDFDY) show a composition bias toward acidic residues. 2 stretches are compositionally biased toward low complexity: residues 427 to 437 (PTQAQSSGQGP) and 450 to 460 (SDSETSSTSSS). The tract at residues 495–856 (FNPQAAGGET…EPDLESAVMY (362 aa)) is actin-binding. Polar residues-rich tracts occupy residues 551 to 574 (AQVS…SSTD), 613 to 625 (QKGS…NNQG), 784 to 793 (RSQVQTIDTS), and 826 to 840 (LLQG…ASTG).

As to quaternary structure, binds RAB27A that has been activated by GTP-binding via its N-terminus. Binds MYO5A, MYO7A and F-actin. Interacts with PRKAR2A. Interacts with components of the exocyst complex, including EXOC3 and EXOC4. As to expression, detected in brain, skin, heart, lung, adrenal medulla, pancreas, intestine, liver, kidney, skeletal muscle and testis. Detected in cochlear and vestibular hair cells in the inner ear, and in photoreceptor and pigment epithelium cells in the retina.

The protein resides in the cytoplasm. It localises to the perinuclear region. It is found in the cytoplasmic vesicle. Its subcellular location is the secretory vesicle. The protein localises to the melanosome. Its function is as follows. Rab effector protein involved in melanosome transport. Serves as link between melanosome-bound RAB27A and the motor proteins MYO5A and MYO7A. May link RAB27A-containing vesicles to actin filaments. Functions as a protein kinase A-anchoring protein (AKAP). May act as a scaffolding protein that links PKA to components of the exocytosis machinery, thus facilitating exocytosis, including insulin release. This is Rab effector MyRIP (Myrip) from Mus musculus (Mouse).